Consider the following 514-residue polypeptide: Peptide chain release factor 3 (514 aa).

In terms of domain architecture, tr-type G spans 8 to 268 (KKRRTFAIIS…TFLEFAPEPH (261 aa)). Residues 17 to 24 (SHPDAGKT), 85 to 89 (DTPGH), and 139 to 142 (NKLD) contribute to the GTP site.

It belongs to the TRAFAC class translation factor GTPase superfamily. Classic translation factor GTPase family. PrfC subfamily.

It is found in the cytoplasm. Increases the formation of ribosomal termination complexes and stimulates activities of RF-1 and RF-2. It binds guanine nucleotides and has strong preference for UGA stop codons. It may interact directly with the ribosome. The stimulation of RF-1 and RF-2 is significantly reduced by GTP and GDP, but not by GMP. The protein is Peptide chain release factor 3 of Streptococcus pyogenes serotype M49 (strain NZ131).